The following is a 1020-amino-acid chain: MAMEKTFDAAEAEARITKAWEEAGAFKAGANRSRDESFTIMIPPPNVTGALHVGHAFNNTLQDILTRWHRMRGFDTLWQPGQDHAGIATQMQVEKMLAATQQPSRRELGREEFLKKVWEWKGQYGGTIVEQLKRLGASCDWSRNAFTMAGAAGDPRTGHENSPNFHDAVIKVFVDMYNKGLIYRGKRLVNWDPHFETAISDLEVENIEVAGHMWHFKYPLAGGATYTYVEKDEDGNIVLEEERDYISIATTRPETMLGDGAVAVHPSDERYAPIVGKLCEIPVGPKEHRRQIPIITDEYPDKNFGSGAVKITGAHDFNDYAVAKRGGIPLYRLMDTRGQMRADGAPYAAEAGKAQDYARGRAFTENEIDVINLVPDHLRGLDRFEARAKVVDEITSEGLAVMTVASDPRLGTTALKPGAEGADAIVPLVEAKPIMQPFGDRSKVVIEPMLTDQWFVDAEKVVGPALDAVRDGTVKIIPESGEKTYYHWLENIEPWCISRQLWWGHQIPVWYGPNRDDLGASYKAFCAASEQDALLLAQNYYGANVEVDFDSGPEELSGGIAFGTIEGPGGQKTLQSVSLTRDPDVLDTWFSSGLWPIGTLGWPEDTDEMRRYFPTSVLITGFDILFFWVARMMMMQLAVVDQVPFHTVYLHQLVRDEKGKKMSKTTGNVIDPLEIVDEFGADALRFTNASMAAIGGVLKLSKERITGYRNFTTKLWNAIRFAEMNEVFTDAVPQLSAAELAPKAAVNRWIIGETARVREEVDAALDSYRFNDAANALYAFVWGKVCDWYVELSKPLLQGEDTEAQAETRATMRWVMDQCLVLLHPIMPFITEELWGLTAERAKMLVHADWPTYKAADLVDDAADREMNWVISVIENTRSARAQMRVPAGLYVPMIVTEIDDHGQAAWDRNEALIKRLARIDSLTKADAMPKGCISIAAPGAAFGLPLAEIIDIGAEKDRLEKAKGKLAKELGGLRGRLNNPKFVESAPDEVVEEARENLAAREEEEARLNEALARLAELG.

The 'HIGH' region motif lies at 45-55; that stretch reads PNVTGALHVGH. The 'KMSKS' region motif lies at 661–665; the sequence is KMSKT. Lysine 664 is an ATP binding site. Residues 955–1020 are a coiled coil; the sequence is AEKDRLEKAK…EALARLAELG (66 aa).

Belongs to the class-I aminoacyl-tRNA synthetase family. ValS type 1 subfamily. In terms of assembly, monomer.

The protein resides in the cytoplasm. The enzyme catalyses tRNA(Val) + L-valine + ATP = L-valyl-tRNA(Val) + AMP + diphosphate. In terms of biological role, catalyzes the attachment of valine to tRNA(Val). As ValRS can inadvertently accommodate and process structurally similar amino acids such as threonine, to avoid such errors, it has a 'posttransfer' editing activity that hydrolyzes mischarged Thr-tRNA(Val) in a tRNA-dependent manner. The protein is Valine--tRNA ligase of Ruegeria pomeroyi (strain ATCC 700808 / DSM 15171 / DSS-3) (Silicibacter pomeroyi).